We begin with the raw amino-acid sequence, 86 residues long: Large ribosomal subunit protein bL27 (86 aa).

The tract at residues 1–23 (MAHKKAGGSTRNGRDSESKRLGV) is disordered.

The protein belongs to the bacterial ribosomal protein bL27 family.

This Alkalilimnicola ehrlichii (strain ATCC BAA-1101 / DSM 17681 / MLHE-1) protein is Large ribosomal subunit protein bL27.